The chain runs to 311 residues: MAIERKFVNDGFVKASMDEYFAEQLNRAGYGGMELNRTPMGTQIVIYSEKPGMVIGKAGKVIRKLTRDVAARYNLENPQIDAQEVKKPELNAQMMASRLAASIERGWYFRKAGHNTLRAVMNAGALGCEVVISGKLTGARSRVEKFVDGYIKHSGNPVDEVVDEGFAVAIKKLGTLGCKVRIIQPGVVLPDSYTTTEPSEPVTEPVEKPAEKPAAKPAEKPVEAPKKESAAKPKTPAVAPEKPVETAEVAEPEEAEEEPQAEVAEDLEEAEVIQVEGSEELRRQVNGVWQHKHEGYDYWHPMARVHKEAKE.

Residues 17–86 (MDEYFAEQLN…NPQIDAQEVK (70 aa)) form the KH type-2 domain. The tract at residues 190-267 (PDSYTTTEPS…EPQAEVAEDL (78 aa)) is disordered. Residues 194 to 204 (TTTEPSEPVTE) show a composition bias toward low complexity. Over residues 205-231 (PVEKPAEKPAAKPAEKPVEAPKKESAA) the composition is skewed to basic and acidic residues. Low complexity predominate over residues 232–247 (KPKTPAVAPEKPVETA). Positions 248–267 (EVAEPEEAEEEPQAEVAEDL) are enriched in acidic residues.

Belongs to the universal ribosomal protein uS3 family. As to quaternary structure, part of the 30S ribosomal subunit.

In terms of biological role, binds the lower part of the 30S subunit head. This chain is Small ribosomal subunit protein uS3, found in Methanosarcina barkeri (strain Fusaro / DSM 804).